Here is a 1246-residue protein sequence, read N- to C-terminus: Myosin-1 (1246 aa).

Positions 1–41 (MGHSRRPVGGEKKSRGFGRSKAVADVGDGRQTGGKPQVKKA) are disordered. Residues 51 to 730 (IGVSDLTLLS…TLFALEAMRD (680 aa)) enclose the Myosin motor domain. Residue 144–151 (GESGAGKT) coordinates ATP. At serine 372 the chain carries Phosphoserine. The tract at residues 419–501 (SIGILDIYGF…PGVFAALNDA (83 aa)) is actin-binding. IQ domains lie at 734-754 (HNMA…RIEC) and 755-780 (AIRI…QGHK). Positions 788–976 (RRRMSLLGSR…TIHTSAGEPP (189 aa)) constitute a TH1 domain. A compositionally biased stretch (polar residues) spans 956–970 (GSSNVDTYKSSTIHT). Disordered regions lie at residues 956-1080 (GSSN…PKKP) and 1127-1246 (WTPQ…DDEW). 2 stretches are compositionally biased toward pro residues: residues 1033–1045 (APQP…PVPQ) and 1065–1078 (APPP…PAPK). Residues 1077–1138 (PKKPMAKVLY…PQAYLEEQKA (62 aa)) enclose the SH3 domain. Composition is skewed to low complexity over residues 1151 to 1166 (TPAT…AKAK) and 1214 to 1228 (NSAS…LAEA). Over residues 1229–1240 (LRQRQEAMHGKQ) the composition is skewed to basic and acidic residues.

This sequence belongs to the TRAFAC class myosin-kinesin ATPase superfamily. Myosin family. In terms of processing, phosphorylation of the TEDS site (Ser-372) is required for the polarization of the actin cytoskeleton. Phosphorylation probably activates the myosin-I ATPase activity.

The protein resides in the cytoplasm. Its subcellular location is the cytoskeleton. The protein localises to the actin patch. In terms of biological role, type-I myosin implicated in the organization of the actin cytoskeleton. Required for proper actin cytoskeleton polarization. At the cell cortex, assembles in patch-like structures together with proteins from the actin-polymerizing machinery and promotes actin assembly. Functions as actin nucleation-promoting factor (NPF) for the Arp2/3 complex. Plays an important role in polarized growth, spore germination, hyphal morphogenesis, and septal wall formation. This chain is Myosin-1 (myoA), found in Aspergillus terreus (strain NIH 2624 / FGSC A1156).